A 368-amino-acid polypeptide reads, in one-letter code: Flagellar P-ring protein 1 (368 aa).

The first 24 residues, 1–24, serve as a signal peptide directing secretion; the sequence is MIFKQIRRLIAAALLAALSLPAAA.

This sequence belongs to the FlgI family. In terms of assembly, the basal body constitutes a major portion of the flagellar organelle and consists of four rings (L,P,S, and M) mounted on a central rod.

Its subcellular location is the periplasm. The protein localises to the bacterial flagellum basal body. Assembles around the rod to form the L-ring and probably protects the motor/basal body from shearing forces during rotation. This Chromobacterium violaceum (strain ATCC 12472 / DSM 30191 / JCM 1249 / CCUG 213 / NBRC 12614 / NCIMB 9131 / NCTC 9757 / MK) protein is Flagellar P-ring protein 1.